The following is a 491-amino-acid chain: Transcription factor AP-2-alpha (491 aa).

Residues 74–161 (GASNGTARLP…GQRQSQESGL (88 aa)) are disordered. A PPxY motif motif is present at residues 111 to 116 (YFPPPY). Composition is skewed to low complexity over residues 119-128 (IYPQSQDPYS) and 142-155 (QPQPQHPGWPGQRQ). Residues Lys-231 and Lys-238 each participate in a glycyl lysine isopeptide (Lys-Gly) (interchain with G-Cter in SUMO2) cross-link. Residue Ser-293 is modified to Phosphoserine; by PKA. The H-S-H (helix-span-helix), dimerization stretch occupies residues 334–464 (RRKAANVTLL…YLTEALKAMD (131 aa)). Over residues 468–481 (LSNNPNSHTDNSAK) the composition is skewed to polar residues. The tract at residues 468 to 491 (LSNNPNSHTDNSAKSSDKEEKHRK) is disordered. The segment covering 482–491 (SSDKEEKHRK) has biased composition (basic and acidic residues).

Belongs to the AP-2 family. As to quaternary structure, binds DNA as a dimer. Can form homodimers or heterodimers with other AP-2 family members. Interacts with WWOX. Interacts with CITED4. Interacts with UBE2I. Interacts with RALBP1 in a complex also containing EPN1 and NUMB during interphase and mitosis. Interacts with KCTD1; this interaction represses transcription activation. Interacts (via C-terminus) with CITED2 (via C-terminus); the interaction stimulates TFAP2A-transcriptional activation. Interacts (via N-terminus) with EP300 (via N-terminus); the interaction requires CITED2. Interacts with KCTD15; this interaction inhibits TFAP2A transcriptional activation.

The protein localises to the nucleus. Its function is as follows. Sequence-specific DNA-binding protein that interacts with inducible viral and cellular enhancer elements to regulate transcription of selected genes. AP-2 factors bind to the consensus sequence 5'-GCCNNNGGC-3' and activate genes involved in a large spectrum of important biological functions including proper eye, face, body wall, limb and neural tube development. They also suppress a number of genes including MCAM/MUC18, C/EBP alpha and MYC. AP-2-alpha is the only AP-2 protein required for early morphogenesis of the lens vesicle. Together with the CITED2 coactivator, stimulates the PITX2 P1 promoter transcription activation. Associates with chromatin to the PITX2 P1 promoter region. In Ovis aries (Sheep), this protein is Transcription factor AP-2-alpha (TFAP2A).